Here is a 509-residue protein sequence, read N- to C-terminus: GMP synthase [glutamine-hydrolyzing] (509 aa).

The region spanning 4–194 (LVLVVDFGGQ…LYNICGLENS (191 aa)) is the Glutamine amidotransferase type-1 domain. Catalysis depends on Cys81, which acts as the Nucleophile. Catalysis depends on residues His168 and Glu170. One can recognise a GMPS ATP-PPase domain in the interval 195-384 (WSMASFAEEK…LGIPHHLVWR (190 aa)). 222 to 228 (SGGVDSS) is a binding site for ATP.

As to quaternary structure, homodimer.

It catalyses the reaction XMP + L-glutamine + ATP + H2O = GMP + L-glutamate + AMP + diphosphate + 2 H(+). Its pathway is purine metabolism; GMP biosynthesis; GMP from XMP (L-Gln route): step 1/1. Functionally, catalyzes the synthesis of GMP from XMP. The protein is GMP synthase [glutamine-hydrolyzing] of Clostridium perfringens (strain 13 / Type A).